The sequence spans 198 residues: Translation machinery-associated protein 22 (198 aa).

One can recognise an SUI1 domain in the interval V99–L170.

It belongs to the DENR family. As to quaternary structure, interacts with the 40S ribosomal subunit.

It localises to the cytoplasm. This is Translation machinery-associated protein 22 (TMA22) from Saccharomyces cerevisiae (strain YJM789) (Baker's yeast).